Consider the following 98-residue polypeptide: Small ribosomal subunit protein uS17 (98 aa).

It belongs to the universal ribosomal protein uS17 family. Part of the 30S ribosomal subunit.

In terms of biological role, one of the primary rRNA binding proteins, it binds specifically to the 5'-end of 16S ribosomal RNA. In Carboxydothermus hydrogenoformans (strain ATCC BAA-161 / DSM 6008 / Z-2901), this protein is Small ribosomal subunit protein uS17.